A 691-amino-acid chain; its full sequence is Competence protein ComA (691 aa).

6 helical membrane-spanning segments follow: residues 183–203, 220–240, 280–300, 322–342, 347–367, and 396–416; these read HLVS…AWLA, WVLA…GFSV, LAVL…LIWA, VLSL…SPLV, IPWF…VPFA, and VAAA…LLLL.

It to B.subtilis ComEC, H.influenzae REC2, and E.coli YcaI.

Its subcellular location is the cell inner membrane. Its function is as follows. Essential for natural transformation. Could be a transporter involved in DNA uptake. The chain is Competence protein ComA (comA) from Neisseria gonorrhoeae.